We begin with the raw amino-acid sequence, 489 residues long: Cytochrome P450-DIT2 (489 aa).

Cysteine 435 serves as a coordination point for heme.

The protein belongs to the cytochrome P450 family. It depends on heme as a cofactor.

Its function is as follows. Involved in spore wall maturation. Thought to catalyze the oxidation of tyrosine residues in the formation of LL-dityrosine a precursor of the spore wall. This is Cytochrome P450-DIT2 (DIT2) from Saccharomyces cerevisiae (strain ATCC 204508 / S288c) (Baker's yeast).